A 407-amino-acid chain; its full sequence is S-adenosylmethionine synthase (407 aa).

Histidine 15 lines the ATP pocket. Aspartate 17 contributes to the Mg(2+) binding site. Glutamate 43 is a K(+) binding site. L-methionine contacts are provided by glutamate 56 and glutamine 100. The interval 100 to 110 (QSPDIAQGVDE) is flexible loop. Residues 171-173 (DGK), 248-249 (KF), aspartate 257, 263-264 (RK), alanine 280, and lysine 284 each bind ATP. Position 257 (aspartate 257) interacts with L-methionine. Lysine 288 contributes to the L-methionine binding site.

The protein belongs to the AdoMet synthase family. In terms of assembly, homotetramer; dimer of dimers. Mg(2+) is required as a cofactor. K(+) serves as cofactor.

Its subcellular location is the cytoplasm. The enzyme catalyses L-methionine + ATP + H2O = S-adenosyl-L-methionine + phosphate + diphosphate. It participates in amino-acid biosynthesis; S-adenosyl-L-methionine biosynthesis; S-adenosyl-L-methionine from L-methionine: step 1/1. In terms of biological role, catalyzes the formation of S-adenosylmethionine (AdoMet) from methionine and ATP. The overall synthetic reaction is composed of two sequential steps, AdoMet formation and the subsequent tripolyphosphate hydrolysis which occurs prior to release of AdoMet from the enzyme. In Synechococcus sp. (strain RCC307), this protein is S-adenosylmethionine synthase.